Here is a 738-residue protein sequence, read N- to C-terminus: Prolyl oligopeptidase A (738 aa).

Active-site charge relay system residues include serine 581, aspartate 665, and histidine 701.

The protein belongs to the peptidase S9A family. In terms of assembly, monomer.

It catalyses the reaction Hydrolysis of Pro-|-Xaa &gt;&gt; Ala-|-Xaa in oligopeptides.. In terms of biological role, housekeeping prolyl oligopeptidase (POP) that behaves like a conventional POP by cleaving peptide bonds on the C-terminal side of prolyl residues within peptides that are up to approximately 30 amino acids long. This chain is Prolyl oligopeptidase A, found in Galerina marginata (strain CBS 339.88).